Here is a 462-residue protein sequence, read N- to C-terminus: Cysteine--tRNA ligase (462 aa).

Cys-30 provides a ligand contact to Zn(2+). The 'HIGH' region signature appears at 32 to 42 (MTVYDYCHVGH). Residues Cys-214, His-239, and Glu-243 each coordinate Zn(2+). The 'KMSKS' region signature appears at 271-275 (KMSKS). Lys-274 contributes to the ATP binding site.

The protein belongs to the class-I aminoacyl-tRNA synthetase family. As to quaternary structure, monomer. Zn(2+) serves as cofactor.

The protein resides in the cytoplasm. The catalysed reaction is tRNA(Cys) + L-cysteine + ATP = L-cysteinyl-tRNA(Cys) + AMP + diphosphate. The polypeptide is Cysteine--tRNA ligase (Cupriavidus taiwanensis (strain DSM 17343 / BCRC 17206 / CCUG 44338 / CIP 107171 / LMG 19424 / R1) (Ralstonia taiwanensis (strain LMG 19424))).